A 1030-amino-acid polypeptide reads, in one-letter code: Importin beta-like SAD2 homolog (1030 aa).

Position 1 is an N-acetylmethionine (methionine 1). One can recognise an Importin N-terminal domain in the interval 25–99 (AEQSLNQLQH…RNQILVFVSQ (75 aa)). Disordered regions lie at residues 886-928 (AAKA…GSTL) and 940-964 (SYSD…PIDE). Acidic residues-rich tracts occupy residues 890-924 (EEEE…DETD) and 943-964 (DDDD…PIDE).

The protein belongs to the importin beta family.

It localises to the cytoplasm. The protein resides in the nucleus. Its function is as follows. Functions probably in nuclear protein import, either by acting as autonomous nuclear transport receptor or as an adapter-like protein in association with other importin subunits. In Arabidopsis thaliana (Mouse-ear cress), this protein is Importin beta-like SAD2 homolog.